The following is a 157-amino-acid chain: Small ribosomal subunit protein uS7 (157 aa).

Belongs to the universal ribosomal protein uS7 family. Part of the 30S ribosomal subunit. Contacts proteins S9 and S11.

Functionally, one of the primary rRNA binding proteins, it binds directly to 16S rRNA where it nucleates assembly of the head domain of the 30S subunit. Is located at the subunit interface close to the decoding center, probably blocks exit of the E-site tRNA. This Salinibacter ruber (strain DSM 13855 / M31) protein is Small ribosomal subunit protein uS7.